We begin with the raw amino-acid sequence, 436 residues long: Bystin (436 aa).

Thr-145 bears the Phosphothreonine mark. A phosphoserine mark is found at Ser-148 and Ser-152.

It belongs to the bystin family.

The protein localises to the nucleus. Its subcellular location is the nucleolus. In terms of biological role, required for processing of 20S pre-rRNA precursor and biogenesis of 40S ribosomal subunits. In Drosophila melanogaster (Fruit fly), this protein is Bystin (bys).